A 246-amino-acid chain; its full sequence is MTNNAAAPLYSLRGLPLIGWRDMSHALNYLFADGQLKQGTLVAINAEKLLTAEDNPEVRALIAAAEFKYADGISVVRSIRKKFPQAQVSRVAGADLWEALMARAGKEGTPVFLVGGKPEVLAQTEAKLRTQWNVNIVGSQDGYFTPEQRQALFARIHASGAKIVTVAMGSPKQELLMRDCREVHPHALYMGVGGTYDVFTGHVKRAPKIWQNLGLEWLYRLLSQPKRITRQVRLLRYLRWHYTGDL.

Belongs to the glycosyltransferase 26 family.

It carries out the reaction UDP-N-acetyl-alpha-D-mannosaminouronate + N-acetyl-alpha-D-glucosaminyl-di-trans,octa-cis-undecaprenyl diphosphate = beta-D-ManNAcA-(1-&gt;4)-alpha-D-GlcNAc-di-trans,octa-cis-undecaprenyl diphosphate + UDP + H(+). The protein operates within bacterial outer membrane biogenesis; enterobacterial common antigen biosynthesis. Its function is as follows. Catalyzes the synthesis of Und-PP-GlcNAc-ManNAcA (Lipid II), the second lipid-linked intermediate involved in enterobacterial common antigen (ECA) synthesis. The sequence is that of UDP-N-acetyl-D-mannosaminuronic acid transferase from Salmonella agona (strain SL483).